Reading from the N-terminus, the 328-residue chain is UPF0421 protein SAUSA300_1870 (328 aa).

4 helical membrane passes run 19–39 (IAIF…IYAI), 61–81 (LPAT…FGDQ), 108–128 (VAVL…IFNF), and 132–152 (TLTA…VFPP).

Belongs to the UPF0421 family.

The protein localises to the cell membrane. The polypeptide is UPF0421 protein SAUSA300_1870 (Staphylococcus aureus (strain USA300)).